Here is a 138-residue protein sequence, read N- to C-terminus: Superoxide dismutase [Mn] (138 aa).

4 residues coordinate Mn(2+): glutamine 1, histidine 49, aspartate 133, and histidine 137.

The protein belongs to the iron/manganese superoxide dismutase family. Mn(2+) serves as cofactor.

It catalyses the reaction 2 superoxide + 2 H(+) = H2O2 + O2. In terms of biological role, destroys superoxide anion radicals which are normally produced within the cells and which are toxic to biological systems. The polypeptide is Superoxide dismutase [Mn] (sodA) (Mycobacteroides chelonae (Mycobacterium chelonae)).